A 127-amino-acid chain; its full sequence is Mating pheromone 4 (127 aa).

A signal peptide spans 1–16 (MKAIFIILAILMVTQA). Residues 17–42 (FKMTSKVKSMNMSRNMSKNTSTLGTK) constitute a propeptide that is removed on maturation.

It localises to the secreted. In terms of biological role, mating ciliate pheromones (or gamones) are diffusible extracellular communication signals that distinguish different intraspecific classes of cells commonly referred to as 'mating types'. They prepare the latter for conjugation by changing their cell surface properties. The sequence is that of Mating pheromone 4 (PHR4) from Euplotoides octocarinatus (Freshwater ciliate).